Here is a 271-residue protein sequence, read N- to C-terminus: Formamidopyrimidine-DNA glycosylase (271 aa).

P2 (schiff-base intermediate with DNA) is an active-site residue. E3 acts as the Proton donor in catalysis. Residue K56 is the Proton donor; for beta-elimination activity of the active site. H89, R107, and R151 together coordinate DNA. The FPG-type zinc finger occupies 236-270 (MVYARQGQPCRVCATPIKSLRQGQRSTFYCPHCQK). R260 (proton donor; for delta-elimination activity) is an active-site residue.

It belongs to the FPG family. Monomer. The cofactor is Zn(2+).

The enzyme catalyses Hydrolysis of DNA containing ring-opened 7-methylguanine residues, releasing 2,6-diamino-4-hydroxy-5-(N-methyl)formamidopyrimidine.. It catalyses the reaction 2'-deoxyribonucleotide-(2'-deoxyribose 5'-phosphate)-2'-deoxyribonucleotide-DNA = a 3'-end 2'-deoxyribonucleotide-(2,3-dehydro-2,3-deoxyribose 5'-phosphate)-DNA + a 5'-end 5'-phospho-2'-deoxyribonucleoside-DNA + H(+). Its function is as follows. Involved in base excision repair of DNA damaged by oxidation or by mutagenic agents. Acts as a DNA glycosylase that recognizes and removes damaged bases. Has a preference for oxidized purines, such as 7,8-dihydro-8-oxoguanine (8-oxoG). Has AP (apurinic/apyrimidinic) lyase activity and introduces nicks in the DNA strand. Cleaves the DNA backbone by beta-delta elimination to generate a single-strand break at the site of the removed base with both 3'- and 5'-phosphates. The sequence is that of Formamidopyrimidine-DNA glycosylase from Albidiferax ferrireducens (strain ATCC BAA-621 / DSM 15236 / T118) (Rhodoferax ferrireducens).